The following is a 581-amino-acid chain: Intermediate filament protein ifa-2 (581 aa).

2 disordered regions span residues 1-35 and 47-68; these read MTDP…GSGN and SSVS…RDNR. A head region spans residues 1 to 74; that stretch reads MTDPDSYRSS…RDNREREKKE (74 aa). Over residues 7-28 the composition is skewed to polar residues; sequence YRSSITSRPSFNRTVTSSSQNY. One can recognise an IF rod domain in the interval 71–424; that stretch reads EKKEIMELND…QMLEGNSEGN (354 aa). The coil 1A stretch occupies residues 75 to 106; it reads IMELNDRLASYIEKVRFLDAQNRKLDADLKML. The interval 107–120 is linker 1; that stretch reads QGRFGKSTGSVKVM. A coil 1B region spans residues 121-258; sequence YEMEITTATN…RGFETELKEL (138 aa). The tract at residues 259 to 276 is linker 12; the sequence is QAQAARDTTSENREYFKN. The segment at 277-424 is coil 2; that stretch reads ELANAMRDIR…QMLEGNSEGN (148 aa). The tail stretch occupies residues 425 to 578; the sequence is GLRQLVEKVV…THIQRQSQQT (154 aa). Positions 449–469 are disordered; that stretch reads RVVKGEHSSRTSYQRSAKGNV. The 118-residue stretch at 457 to 574 folds into the LTD domain; it reads SRTSYQRSAK…EERATHIQRQ (118 aa).

This sequence belongs to the intermediate filament family. In terms of assembly, forms some heteromeric filaments with ifb-1. Mainly expressed in regions of the hypodermis adjacent to muscle. Expressed in longitudinal stripes where the mechanosensory neurons interface with the hypodermis. Also expressed to the uterine seam and within the uterine-vulval cells.

Its subcellular location is the cell junction. The protein localises to the hemidesmosome. Its function is as follows. Cytoplasmic intermediate filaments provide mechanical strength to cells. Essential protein, involved in attachment structures in epidermal cells that connect muscles to the external cuticle. Probably acts by forming hypodermal hemidesmosome complexes that help mediate muscle-cuticle force transduction. Although expressed during embryogenesis, it is not required for embryonic development of muscle-cuticle linkages nor for the localization of other proteins to the hemidesmosomes in embryos. This chain is Intermediate filament protein ifa-2, found in Caenorhabditis elegans.